Consider the following 359-residue polypeptide: Dihydroorotate dehydrogenase (quinone) (359 aa).

Residues 68-72 (AGFDK) and Thr-92 each bind FMN. Lys-72 provides a ligand contact to substrate. Residue 117–121 (NRMGF) participates in substrate binding. Residues Asn-145 and Asn-176 each contribute to the FMN site. Residue Asn-176 coordinates substrate. Residue Ser-179 is the Nucleophile of the active site. Asn-181 lines the substrate pocket. 2 residues coordinate FMN: Lys-212 and Thr-240. Residue 241–242 (NT) participates in substrate binding. FMN-binding positions include Gly-266, Gly-295, and 316 to 317 (YT).

This sequence belongs to the dihydroorotate dehydrogenase family. Type 2 subfamily. As to quaternary structure, monomer. FMN is required as a cofactor.

Its subcellular location is the cell membrane. The catalysed reaction is (S)-dihydroorotate + a quinone = orotate + a quinol. It functions in the pathway pyrimidine metabolism; UMP biosynthesis via de novo pathway; orotate from (S)-dihydroorotate (quinone route): step 1/1. Catalyzes the conversion of dihydroorotate to orotate with quinone as electron acceptor. The polypeptide is Dihydroorotate dehydrogenase (quinone) (Corynebacterium striatum).